The chain runs to 329 residues: MYG1 protein (329 aa).

The protein belongs to the MYG1 family.

The sequence is that of MYG1 protein from Dictyostelium discoideum (Social amoeba).